An 842-amino-acid polypeptide reads, in one-letter code: Axin-1 (842 aa).

Positions 1-75 are disordered; that stretch reads MSVKGKGFPL…LDLGYEPEGS (75 aa). A compositionally biased stretch (polar residues) spans 34–46; it reads TTDQRPFSHTYYS. Positions 88–211 constitute an RGS domain; that stretch reads SLHSLLDDQD…LKSDIYLEYT (124 aa). Disordered regions lie at residues 218-242, 277-297, 316-344, 414-451, 482-532, 543-562, 615-637, 656-675, and 729-754; these read PKNY…PTLN, SHCA…PGTW, TSAN…DGIP, KRVR…NSRY, KTPG…AKVD, YHHV…DGES, KKAD…EDSE, HKKS…TELA, and RLEE…KNVS. A compositionally biased stretch (polar residues) spans 316-339; sequence TSANDSEQQSMSSDADTMSLTDSS. Positions 348–433 are interaction with GSK3B; that stretch reads LRKHYRREMQ…DGDVSSGPSV (86 aa). The interaction with beta-catenin stretch occupies residues 434–508; it reads ISHKLPSGPP…RSPDGHLSKT (75 aa). The span at 543–552 shows a compositional bias: basic residues; that stretch reads YHHVHHHGGV. Over residues 615–626 the composition is skewed to basic and acidic residues; it reads KKADLGKSESAS. The DIX domain maps to 760–842; that stretch reads CDNIVVAYYF…KIIGQVEKID (83 aa).

Homodimer. Interacts with hwa; leading to promote the tankyrase-mediated degradation of axin1. Post-translationally, ADP-ribosylated by tankyrase tnks and tnks2. Poly-ADP-ribosylated protein is recognized by rnf146, followed by ubiquitination at 'Lys-48' and subsequent activation of the Wnt signaling pathway. Ubiquitinated by rnf146 when poly-ADP-ribosylated, leading to its degradation and subsequent activation of the Wnt signaling pathway.

It localises to the cytoplasm. It is found in the nucleus. The protein localises to the membrane. The protein resides in the cell membrane. Functionally, component of the beta-catenin destruction complex required for regulating ctnnb1 levels through phosphorylation and ubiquitination, and modulating Wnt-signaling. Controls dorsoventral patterning via two opposing effects; down-regulates ctnnb1 to inhibit the Wnt signaling pathway and ventralize embryos, but also dorsalizes embryos by activating a Wnt-independent JNK signaling pathway. The sequence is that of Axin-1 (axin1) from Xenopus laevis (African clawed frog).